We begin with the raw amino-acid sequence, 1322 residues long: Serine/threonine-protein kinase TIO (1322 aa).

The region spanning 6-256 (YHVIELVGEG…WPALREHPFV (251 aa)) is the Protein kinase domain. ATP is bound by residues 12 to 20 (VGEGSFGRV) and Lys-35. The Proton acceptor role is filled by Asp-127. Positions 1000–1322 (CMEDRDLLKA…VIVAKVSGES (323 aa)) are required for the binding to Kinesin-12 members. ARM repeat units lie at residues 1056-1098 (PRLA…DLSR), 1101-1140 (KAFY…NMCR), 1143-1182 (GYFY…NAAY), 1183-1223 (HNDT…NLVR), 1226-1273 (NKLC…LFSL), and 1281-1320 (QICR…KVSG).

This sequence belongs to the protein kinase superfamily. Ser/Thr protein kinase family. As to quaternary structure, interacts with Kinesin-12 members KIN12A/PAKRP1 and KIN12B/PAKRP1L. Interacts with KIN7B/NACK2. In terms of tissue distribution, ubiquitous.

It is found in the cytoplasm. The protein resides in the cytoskeleton. It localises to the phragmoplast. The catalysed reaction is L-seryl-[protein] + ATP = O-phospho-L-seryl-[protein] + ADP + H(+). The enzyme catalyses L-threonyl-[protein] + ATP = O-phospho-L-threonyl-[protein] + ADP + H(+). In terms of biological role, plays a role in conventional modes of cytokinesis in meristems and during male gametogenesis but also acts in nonconventional modes of cytokinesis (cellularization) during female gametogenesis. Constitutes a signaling module in association with Kinesin-12 members that is required to support phragmoplast expansion and cell-plate growth in plant cells. The sequence is that of Serine/threonine-protein kinase TIO (TIO) from Arabidopsis thaliana (Mouse-ear cress).